The sequence spans 324 residues: Phospho-N-acetylmuramoyl-pentapeptide-transferase (324 aa).

10 helical membrane-spanning segments follow: residues 5-25 (VILF…PIFI), 55-75 (GGLM…DIFF), 81-101 (TYML…DDFI), 122-142 (LIAL…VVSI), 147-167 (VSLD…VGGS), 176-196 (LDGL…VLAW), 203-223 (VAIF…FNAH), 227-247 (VFMG…IAIL), 250-270 (LEIL…SVII), and 302-322 (VVVT…YIEV).

The protein belongs to the glycosyltransferase 4 family. MraY subfamily. It depends on Mg(2+) as a cofactor.

Its subcellular location is the cell membrane. The catalysed reaction is UDP-N-acetyl-alpha-D-muramoyl-L-alanyl-gamma-D-glutamyl-meso-2,6-diaminopimeloyl-D-alanyl-D-alanine + di-trans,octa-cis-undecaprenyl phosphate = di-trans,octa-cis-undecaprenyl diphospho-N-acetyl-alpha-D-muramoyl-L-alanyl-D-glutamyl-meso-2,6-diaminopimeloyl-D-alanyl-D-alanine + UMP. It participates in cell wall biogenesis; peptidoglycan biosynthesis. Catalyzes the initial step of the lipid cycle reactions in the biosynthesis of the cell wall peptidoglycan: transfers peptidoglycan precursor phospho-MurNAc-pentapeptide from UDP-MurNAc-pentapeptide onto the lipid carrier undecaprenyl phosphate, yielding undecaprenyl-pyrophosphoryl-MurNAc-pentapeptide, known as lipid I. This chain is Phospho-N-acetylmuramoyl-pentapeptide-transferase, found in Anoxybacillus flavithermus (strain DSM 21510 / WK1).